Here is a 159-residue protein sequence, read N- to C-terminus: Small ribosomal subunit protein bS16 (159 aa).

Residues 102 to 119 are compositionally biased toward low complexity; sequence GIPEAAEEAPATESVAEA. Positions 102 to 159 are disordered; the sequence is GIPEAAEEAPATESVAEAEVADVPESELSEAATETAAAELSPPEAEVEKPQVEEAVEA. Acidic residues predominate over residues 120–129; sequence EVADVPESEL. Residues 130–145 are compositionally biased toward low complexity; the sequence is SEAATETAAAELSPPE.

The protein belongs to the bacterial ribosomal protein bS16 family.

In Synechococcus sp. (strain JA-2-3B'a(2-13)) (Cyanobacteria bacterium Yellowstone B-Prime), this protein is Small ribosomal subunit protein bS16.